The chain runs to 194 residues: Prefoldin subunit 3 (194 aa).

Belongs to the prefoldin subunit alpha family. In terms of assembly, heterohexamer of two PFD-alpha type and four PFD-beta type subunits. Interacts with itself. Interacts with Vhl and betaTub56D/tubulin beta-1 chain. Interacts with tubulin alpha-beta heterodimers by itself or in complex with Vhl. Does not interact with microtubules (MTs). Expressed in larval central nervous system (CNS) and pupal testis (at protein level).

It localises to the cytoplasm. Its function is as follows. Binds specifically to cytosolic chaperonin (c-CPN) and transfers target proteins to it. Binds to nascent polypeptide chain and promotes folding in an environment in which there are many competing pathways for nonnative proteins. Required for tubulin stability and spindle and centrosome formation in cooperation with Vhl. The polypeptide is Prefoldin subunit 3 (mgr) (Drosophila melanogaster (Fruit fly)).